A 550-amino-acid chain; its full sequence is Arginine--tRNA ligase (550 aa).

The short motif at 130–140 is the 'HIGH' region element; it reads ANPTGPIHIGG.

It belongs to the class-I aminoacyl-tRNA synthetase family. Monomer.

Its subcellular location is the cytoplasm. It catalyses the reaction tRNA(Arg) + L-arginine + ATP = L-arginyl-tRNA(Arg) + AMP + diphosphate. This is Arginine--tRNA ligase (argS) from Mycolicibacterium smegmatis (strain ATCC 700084 / mc(2)155) (Mycobacterium smegmatis).